Here is a 241-residue protein sequence, read N- to C-terminus: Ribonuclease PH (241 aa).

Phosphate-binding positions include R89 and 127–129 (GTR).

It belongs to the RNase PH family. Homohexameric ring arranged as a trimer of dimers.

It catalyses the reaction tRNA(n+1) + phosphate = tRNA(n) + a ribonucleoside 5'-diphosphate. In terms of biological role, phosphorolytic 3'-5' exoribonuclease that plays an important role in tRNA 3'-end maturation. Removes nucleotide residues following the 3'-CCA terminus of tRNAs; can also add nucleotides to the ends of RNA molecules by using nucleoside diphosphates as substrates, but this may not be physiologically important. Probably plays a role in initiation of 16S rRNA degradation (leading to ribosome degradation) during starvation. The chain is Ribonuclease PH from Xanthomonas axonopodis pv. citri (strain 306).